Here is a 233-residue protein sequence, read N- to C-terminus: Putative 26S proteasome non-ATPase regulatory subunit 8 homolog B (233 aa).

N-acetylmethionine is present on methionine 1. A PCI domain is found at 38-217; sequence DHYLISLSLN…APCKEIPSLQ (180 aa).

The protein belongs to the proteasome subunit S14 family. As to quaternary structure, component of the 19S regulatory particle (RP/PA700) lid subcomplex of the 26S proteasome. The 26S proteasome is composed of a core protease (CP), known as the 20S proteasome, capped at one or both ends by the 19S regulatory particle (RP/PA700). The RP/PA700 complex is composed of at least 17 different subunits in two subcomplexes, the base and the lid, which form the portions proximal and distal to the 20S proteolytic core, respectively. Interacts with UCH1 and UCH2.

Its function is as follows. Acts as a regulatory subunit of the 26S proteasome which is involved in the ATP-dependent degradation of ubiquitinated proteins. This Arabidopsis thaliana (Mouse-ear cress) protein is Putative 26S proteasome non-ATPase regulatory subunit 8 homolog B.